Consider the following 414-residue polypeptide: TAR DNA-binding protein 43 (414 aa).

2 consecutive RRM domains span residues 104–200 (SDLI…RCTE) and 191–262 (RKVF…NAEP). Residues 261-274 (EPKHNSNRQLERGG) show a composition bias toward basic and acidic residues. 2 disordered regions span residues 261–303 (EPKH…GNNQ) and 341–373 (ASQQNQSGPSGNNQPQGNMQREQNQGFSSGNNS). Over residues 275–303 (RFGGNPGGFGNQGGFGNSRGGGGGLGNNQ) the composition is skewed to gly residues. Residues 342 to 373 (SQQNQSGPSGNNQPQGNMQREQNQGFSSGNNS) show a composition bias toward low complexity.

As to quaternary structure, homodimer.

Its subcellular location is the nucleus. The protein resides in the cytoplasm. The protein localises to the stress granule. It localises to the mitochondrion. Its function is as follows. Probably involved in transcriptional repression. May play a role in the maintenance of the circadian clock periodicity. The polypeptide is TAR DNA-binding protein 43 (TARDBP) (Gallus gallus (Chicken)).